A 359-amino-acid chain; its full sequence is 3-dehydroquinate synthase (359 aa).

Residues 106–110 (GVVGD), 130–131 (TS), Lys143, and Lys152 each bind NAD(+). Glu185, His246, and His262 together coordinate Zn(2+).

Belongs to the sugar phosphate cyclases superfamily. Dehydroquinate synthase family. NAD(+) serves as cofactor. The cofactor is Co(2+). Zn(2+) is required as a cofactor.

It is found in the cytoplasm. The catalysed reaction is 7-phospho-2-dehydro-3-deoxy-D-arabino-heptonate = 3-dehydroquinate + phosphate. It participates in metabolic intermediate biosynthesis; chorismate biosynthesis; chorismate from D-erythrose 4-phosphate and phosphoenolpyruvate: step 2/7. In terms of biological role, catalyzes the conversion of 3-deoxy-D-arabino-heptulosonate 7-phosphate (DAHP) to dehydroquinate (DHQ). The sequence is that of 3-dehydroquinate synthase from Lactiplantibacillus plantarum (strain ATCC BAA-793 / NCIMB 8826 / WCFS1) (Lactobacillus plantarum).